Reading from the N-terminus, the 100-residue chain is Replication restart protein PriB (100 aa).

The 100-residue stretch at 1–100 (MTNRMELSGT…VLHADDIIHI (100 aa)) folds into the SSB domain.

This sequence belongs to the PriB family. Homodimer. Interacts with PriA and DnaT. Component of the replication restart primosome. Primosome assembly occurs via a 'hand-off' mechanism. PriA binds to replication forks, subsequently PriB then DnaT bind; DnaT then displaces ssDNA to generate the helicase loading substrate.

Its function is as follows. Involved in the restart of stalled replication forks, which reloads the replicative helicase on sites other than the origin of replication; the PriA-PriB pathway is the major replication restart pathway. During primosome assembly it facilitates complex formation between PriA and DnaT on DNA; stabilizes PriA on DNA. Stimulates the DNA unwinding activity of PriA helicase. This Vibrio vulnificus (strain CMCP6) protein is Replication restart protein PriB.